The chain runs to 547 residues: Large cysteine-rich periplasmic protein OmcB, serovar E (547 aa).

The N-terminal stretch at 1–22 is a signal peptide; the sequence is MNKLIRRAVTIFAVTSVASLFA. Residues 23–40 constitute a propeptide that is removed on maturation; it reads SGVLETSMAESLSTNVIS. Positions 46–83 are disordered; the sequence is AKDNTSHKSKKARKNHSKETLVDRKEVAPVHESKATGP. Over residues 52 to 61 the composition is skewed to basic residues; sequence HKSKKARKNH. The segment covering 62–79 has biased composition (basic and acidic residues); sequence SKETLVDRKEVAPVHESK.

Part of a disulfide cross-linked outer membrane complex (COMC) composed of the major outer membrane porin (MOMP), the small cysteine-rich protein (OmcA) and the large cysteine-rich periplasmic protein (OmcB).

Its subcellular location is the periplasm. In elementary bodies (EBs, the infectious stage, which is able to survive outside the host cell) provides the structural integrity of the outer envelope through disulfide cross-links with the small cysteine-rich protein and the major outer membrane protein. It has been described in publications as the Sarkosyl-insoluble COMC (Chlamydia outer membrane complex), and serves as the functional equivalent of peptidoglycan. This Chlamydia trachomatis protein is Large cysteine-rich periplasmic protein OmcB, serovar E (omcB).